The primary structure comprises 324 residues: IDS-like terpene synthase 2 (324 aa).

Mg(2+) contacts are provided by Asp77 and Asp81.

Belongs to the FPP/GGPP synthase family. Mg(2+) is required as a cofactor.

It catalyses the reaction (2E)-geranyl diphosphate = (E)-beta-ocimene + diphosphate. It carries out the reaction (2E,6E)-farnesyl diphosphate = (3E,6E)-alpha-farnesene + diphosphate. The catalysed reaction is (2E,6E,10E)-geranylgeranyl diphosphate = (E,E,E)-alpha-springene + diphosphate. In terms of biological role, terpene synthase that shows monoterpene synthase activity and produces (E)-beta-ocimene as a major product, using geranyl diphosphate (GPP) as substrate. Also shows sesquiterpene synthase activity as it is able to convert farnesyl diphosphate (FPP) into (E,E)-alpha-farnesene. Finally, TPS2 can convert geranylgeranyl diphosphate into (E,E,E)-alpha-springene. This chain is IDS-like terpene synthase 2, found in Melampsora lini (Rust fungus).